A 187-amino-acid chain; its full sequence is Flavin-dependent monooxygenase, reductase subunit HsaB (187 aa).

FAD-binding positions include 32 to 36, 38 to 39, 53 to 55, 59 to 60, and 85 to 86; these read PVGFA, QS, CPT, RS, and RF. Residue 152-155 coordinates NAD(+); sequence FYRG.

The protein belongs to the non-flavoprotein flavin reductase family. HsaAB monooxygenase consists of an oxygenase component HsaA and a reductase component HsaB.

The enzyme catalyses a reduced flavin + NAD(+) = an oxidized flavin + NADH + 2 H(+). The protein operates within lipid metabolism; steroid biosynthesis. In terms of biological role, catalyzes the reduction of free flavins (FMN or FAD) by NADH. Subsequently, the reduced flavins diffuse to the HsaA oxygenase subunit. This chain is Flavin-dependent monooxygenase, reductase subunit HsaB (hsaB), found in Mycobacterium tuberculosis (strain CDC 1551 / Oshkosh).